The following is a 196-amino-acid chain: DnaA initiator-associating protein DiaA (196 aa).

The SIS domain occupies 34-196 (MVQSLLNGNK…DNTLFPHQDD (163 aa)).

The protein belongs to the SIS family. DiaA subfamily. Homotetramer; dimer of dimers.

In terms of biological role, required for the timely initiation of chromosomal replication via direct interactions with the DnaA initiator protein. This chain is DnaA initiator-associating protein DiaA, found in Photorhabdus laumondii subsp. laumondii (strain DSM 15139 / CIP 105565 / TT01) (Photorhabdus luminescens subsp. laumondii).